Here is a 414-residue protein sequence, read N- to C-terminus: E3 ubiquitin-protein ligase makorin-2 (414 aa).

2 C3H1-type zinc fingers span residues 2–29 (STKQ…HDLT) and 31–58 (SKPS…HIKP). Residues 57–94 (KPPGRGSGAPADHSNRSSSSAGASAPGPGPPANTSKHL) form a disordered region. A compositionally biased stretch (low complexity) spans 73–82 (SSSSAGASAP). The segment at 164–191 (QTSPQICPFLAAGQCQYGESCPYLHGEM) adopts a C3H1-type 3 zinc-finger fold. The interval 192–221 (CEICRQHVLHPHDPEQRAAHEKKCMVAFEM) is makorin-type Cys-His. The RING-type zinc finger occupies 237-291 (CKICLDVVYEKSSPSERRFGILSSCAHTYCLNCIRQWRCVEQLHNQIRKSCPECR). Residues 320 to 349 (GVSKKACKYFDQGRGTCPFGGKCFYMHAYA) form a C3H1-type 4 zinc finger.

It is found in the cytoplasm. It localises to the nucleus. It carries out the reaction S-ubiquitinyl-[E2 ubiquitin-conjugating enzyme]-L-cysteine + [acceptor protein]-L-lysine = [E2 ubiquitin-conjugating enzyme]-L-cysteine + N(6)-ubiquitinyl-[acceptor protein]-L-lysine.. It functions in the pathway protein modification; protein ubiquitination. In terms of biological role, E3 ubiquitin ligase catalyzing the covalent attachment of ubiquitin moieties onto substrate proteins. Inhibits neurogenesis and axis formation during embryonic development by modulating the phosphatidylinositol 3-kinase (PI3K) pathway. Acts downstream of PI3K and akt1 to up-regulate gsk3b mRNA expression. The protein is E3 ubiquitin-protein ligase makorin-2 (mkrn2) of Danio rerio (Zebrafish).